We begin with the raw amino-acid sequence, 390 residues long: GTPase Obg (390 aa).

The Obg domain occupies 1 to 159 (MKFVDEATIK…RELRLELLLL (159 aa)). The 174-residue stretch at 160–333 (ADVGMLGLPN…LCDELADFMD (174 aa)) folds into the OBG-type G domain. GTP-binding positions include 166 to 173 (GLPNAGKS), 191 to 195 (FTTLI), 213 to 216 (DIPG), 283 to 286 (NKTD), and 314 to 316 (AAV). Residues Ser-173 and Thr-193 each contribute to the Mg(2+) site.

This sequence belongs to the TRAFAC class OBG-HflX-like GTPase superfamily. OBG GTPase family. Monomer. It depends on Mg(2+) as a cofactor.

The protein resides in the cytoplasm. An essential GTPase which binds GTP, GDP and possibly (p)ppGpp with moderate affinity, with high nucleotide exchange rates and a fairly low GTP hydrolysis rate. Plays a role in control of the cell cycle, stress response, ribosome biogenesis and in those bacteria that undergo differentiation, in morphogenesis control. The sequence is that of GTPase Obg from Aliivibrio fischeri (strain MJ11) (Vibrio fischeri).